The chain runs to 353 residues: WAT1-related protein At3g28100 (353 aa).

Helical transmembrane passes span 12 to 32 (AVFL…STLF), 43 to 63 (YAFL…SLFF), 81 to 101 (IGLL…GIEY), 105 to 125 (TLAS…AIIF), 137 to 157 (SVAK…VVLY), 187 to 207 (WLIG…SFIL), 219 to 239 (FTVS…IGLV), 252 to 272 (FDIT…YYVI), 283 to 303 (LYLA…SAVF), and 308 to 328 (LYLG…AVMW). The EamA domain occupies 27 to 155 (GISTLFKVAT…LSLIGALVVV (129 aa)).

The protein belongs to the drug/metabolite transporter (DMT) superfamily. Plant drug/metabolite exporter (P-DME) (TC 2.A.7.4) family.

The protein resides in the membrane. The protein is WAT1-related protein At3g28100 of Arabidopsis thaliana (Mouse-ear cress).